Reading from the N-terminus, the 118-residue chain is Ribonuclease P protein component (118 aa).

The protein belongs to the RnpA family. Consists of a catalytic RNA component (M1 or rnpB) and a protein subunit.

The catalysed reaction is Endonucleolytic cleavage of RNA, removing 5'-extranucleotides from tRNA precursor.. Its function is as follows. RNaseP catalyzes the removal of the 5'-leader sequence from pre-tRNA to produce the mature 5'-terminus. It can also cleave other RNA substrates such as 4.5S RNA. The protein component plays an auxiliary but essential role in vivo by binding to the 5'-leader sequence and broadening the substrate specificity of the ribozyme. In Vibrio campbellii (strain ATCC BAA-1116), this protein is Ribonuclease P protein component.